Here is a 157-residue protein sequence, read N- to C-terminus: Large ribosomal subunit protein eL24 (157 aa).

Residues 94–157 are disordered; the sequence is RNQKPEVRKA…ISAPRVGGKR (64 aa). A compositionally biased stretch (basic and acidic residues) spans 96 to 117; the sequence is QKPEVRKAQREQAIRAAKEAKK. Positions 123 to 140 are enriched in low complexity; sequence KKPAAPSAKASTKTAQKP.

This sequence belongs to the eukaryotic ribosomal protein eL24 family. As to quaternary structure, component of the large ribosomal subunit.

The protein resides in the cytoplasm. Its function is as follows. Component of the large ribosomal subunit. The ribosome is a large ribonucleoprotein complex responsible for the synthesis of proteins in the cell. The sequence is that of Large ribosomal subunit protein eL24 (rpl24) from Pagrus major (Red sea bream).